The sequence spans 481 residues: DNA gyrase subunit B (481 aa).

The Toprim domain maps to 323–442; sequence CELYLVEGDS…QGYVYIAQPP (120 aa). Glutamate 329, aspartate 407, and aspartate 409 together coordinate Mg(2+).

Belongs to the type II topoisomerase GyrB family. Heterotetramer, composed of two GyrA and two GyrB chains. In the heterotetramer, GyrA contains the active site tyrosine that forms a transient covalent intermediate with DNA, while GyrB binds cofactors and catalyzes ATP hydrolysis. Mg(2+) is required as a cofactor. Requires Mn(2+) as cofactor. The cofactor is Ca(2+).

Its subcellular location is the cytoplasm. It carries out the reaction ATP-dependent breakage, passage and rejoining of double-stranded DNA.. In terms of biological role, a type II topoisomerase that negatively supercoils closed circular double-stranded (ds) DNA in an ATP-dependent manner to modulate DNA topology and maintain chromosomes in an underwound state. Negative supercoiling favors strand separation, and DNA replication, transcription, recombination and repair, all of which involve strand separation. Also able to catalyze the interconversion of other topological isomers of dsDNA rings, including catenanes and knotted rings. Type II topoisomerases break and join 2 DNA strands simultaneously in an ATP-dependent manner. This is DNA gyrase subunit B (gyrB) from Chitinophaga japonensis (Flexibacter japonensis).